The primary structure comprises 69 residues: MFGLGGQELILILLIILLLFGAKKLPELARGLGKGMKEFKKAQTEIEEEFNSVVDEKPKKEKTASSTQS.

The helical transmembrane segment at 1-21 threads the bilayer; sequence MFGLGGQELILILLIILLLFG.

The protein belongs to the TatA/E family. Forms a complex with TatC.

The protein resides in the cell inner membrane. Part of the twin-arginine translocation (Tat) system that transports large folded proteins containing a characteristic twin-arginine motif in their signal peptide across membranes. TatA could form the protein-conducting channel of the Tat system. The protein is Sec-independent protein translocase protein TatA of Pelodictyon phaeoclathratiforme (strain DSM 5477 / BU-1).